A 188-amino-acid chain; its full sequence is ATP synthase subunit b (188 aa).

Residues 30–50 (IVWSLIPFLIILIVFWKLVLP) traverse the membrane as a helical segment.

This sequence belongs to the ATPase B chain family. As to quaternary structure, F-type ATPases have 2 components, F(1) - the catalytic core - and F(0) - the membrane proton channel. F(1) has five subunits: alpha(3), beta(3), gamma(1), delta(1), epsilon(1). F(0) has three main subunits: a(1), b(2) and c(10-14). The alpha and beta chains form an alternating ring which encloses part of the gamma chain. F(1) is attached to F(0) by a central stalk formed by the gamma and epsilon chains, while a peripheral stalk is formed by the delta and b chains.

The protein localises to the cell membrane. F(1)F(0) ATP synthase produces ATP from ADP in the presence of a proton or sodium gradient. F-type ATPases consist of two structural domains, F(1) containing the extramembraneous catalytic core and F(0) containing the membrane proton channel, linked together by a central stalk and a peripheral stalk. During catalysis, ATP synthesis in the catalytic domain of F(1) is coupled via a rotary mechanism of the central stalk subunits to proton translocation. Functionally, component of the F(0) channel, it forms part of the peripheral stalk, linking F(1) to F(0). This chain is ATP synthase subunit b, found in Corynebacterium glutamicum (strain R).